Reading from the N-terminus, the 184-residue chain is dCTP deaminase (184 aa).

107 to 112 (KSTYAR) contacts dCTP. Glu133 serves as the catalytic Proton donor/acceptor. DCTP is bound by residues Gln152, Tyr166, and Gln176.

It belongs to the dCTP deaminase family. As to quaternary structure, homotrimer.

It carries out the reaction dCTP + H2O + H(+) = dUTP + NH4(+). It functions in the pathway pyrimidine metabolism; dUMP biosynthesis; dUMP from dCTP (dUTP route): step 1/2. Functionally, catalyzes the deamination of dCTP to dUTP. The protein is dCTP deaminase of Granulibacter bethesdensis (strain ATCC BAA-1260 / CGDNIH1).